Consider the following 307-residue polypeptide: uncharacterized protein (307 aa).

An N-terminal signal peptide occupies residues 1–25 (MKFQKRNIQLVLILLLILNNCFINS). Positions 60 to 90 (ENNNKNNNNNNNNNNNNNNNNKNSKVKNDDS) are disordered. Low complexity predominate over residues 63–82 (NKNNNNNNNNNNNNNNNNKN). N-linked (GlcNAc...) asparagine glycosylation is found at asparagine 124 and asparagine 173. Transmembrane regions (helical) follow at residues 244–264 (IIFAITFIIFLFTYLIIYYLA) and 275–295 (IIGVLTVFLWVIITLLFTIVI).

The protein resides in the membrane. This is an uncharacterized protein from Dictyostelium discoideum (Social amoeba).